Consider the following 1060-residue polypeptide: Desmoglein-1-beta (1060 aa).

The signal sequence occupies residues 1 to 23 (MDWHSFRIAALLLTSLVVLEVNS). A propeptide spanning residues 24 to 49 (EFQIQVRDHNAKNGTIKWHSIRRQKR) is cleaved from the precursor. Cadherin domains lie at 50 to 157 (EWIK…PPVF), 158 to 269 (SMTT…IPYL), 270 to 389 (EQSS…RPGS), and 386 to 493 (RPGS…PGSD). The Extracellular portion of the chain corresponds to 50-567 (EWIKFAAACR…ITEDNVHFGP (518 aa)). Asparagine 110 is a glycosylation site (N-linked (GlcNAc...) (high mannose) asparagine). A glycan (N-linked (GlcNAc...) asparagine) is linked at asparagine 180. The interval 490–560 (PGSDGGGSSS…PEPEPFDITE (71 aa)) is disordered. Over residues 492-503 (SDGGGSSSGSGG) the composition is skewed to gly residues. Positions 510–519 (NGYQGTSTVG) are enriched in polar residues. Gly residues predominate over residues 525–537 (GSGGVTSSGGGSG). Positions 549 to 560 (DEPEPEPFDITE) are enriched in acidic residues. Residues 568-588 (AGIGLLIMGFLVLGLVPFLLI) form a helical membrane-spanning segment. Topologically, residues 589–1060 (CCDCGGAPGG…TKYSTVQYSK (472 aa)) are cytoplasmic. Residues 792–801 (PDPDSSWPPQ) are compositionally biased toward low complexity. The segment at 792-811 (PDPDSSWPPQSTEPMCPQST) is disordered. 5 Desmoglein repeat repeats span residues 835–861 (AYPS…TVRE), 862–891 (SYAT…ERVV), 892–921 (GPVP…ERVI), 922–949 (APGS…ERVI), and 950–978 (QPTS…ERVV).

As to quaternary structure, interacts with DSC3; there is evidence to suggest that the interaction promotes cell-cell adhesion of keratinocytes. In terms of tissue distribution, expressed in epidermis.

It is found in the cell membrane. Its subcellular location is the cell junction. The protein resides in the desmosome. It localises to the cytoplasm. The protein localises to the nucleus. Functionally, component of intercellular desmosome junctions. Involved in the interaction of plaque proteins and intermediate filaments mediating cell-cell adhesion. The chain is Desmoglein-1-beta (Dsg1b) from Mus musculus (Mouse).